A 462-amino-acid chain; its full sequence is Glutamate--tRNA ligase 1 (462 aa).

Positions Pro8 to Gly18 match the 'HIGH' region motif. Positions Lys237–Arg241 match the 'KMSKS' region motif. Residue Lys240 participates in ATP binding.

The protein belongs to the class-I aminoacyl-tRNA synthetase family. Glutamate--tRNA ligase type 1 subfamily. In terms of assembly, monomer.

Its subcellular location is the cytoplasm. It carries out the reaction tRNA(Glu) + L-glutamate + ATP = L-glutamyl-tRNA(Glu) + AMP + diphosphate. In terms of biological role, catalyzes the attachment of glutamate to tRNA(Glu) in a two-step reaction: glutamate is first activated by ATP to form Glu-AMP and then transferred to the acceptor end of tRNA(Glu). The chain is Glutamate--tRNA ligase 1 from Sulfurimonas denitrificans (strain ATCC 33889 / DSM 1251) (Thiomicrospira denitrificans (strain ATCC 33889 / DSM 1251)).